Reading from the N-terminus, the 350-residue chain is Quinolinate phosphoribosyltransferase [decarboxylating] 1b (350 aa).

Substrate contacts are provided by residues arginine 141, 172 to 174 (TRK), arginine 196, lysine 206, glutamate 239, aspartate 266, 298 to 300 (SGN), and 319 to 321 (SGA).

Belongs to the NadC/ModD family.

The catalysed reaction is nicotinate beta-D-ribonucleotide + CO2 + diphosphate = quinolinate + 5-phospho-alpha-D-ribose 1-diphosphate + 2 H(+). It participates in alkaloid biosynthesis; nicotine biosynthesis. It functions in the pathway cofactor biosynthesis; NAD(+) biosynthesis; nicotinate D-ribonucleotide from quinolinate: step 1/1. Its function is as follows. Involved in the biosynthesis of pyridine alkaloid natural products, leading mainly to the production of anabasine, anatabine, nicotine and nornicotine, effective deterrents against herbivores with antiparasitic and pesticide properties (neurotoxins); nornicotine serves as the precursor in the synthesis of the carcinogen compound N'-nitrosonornicotine (NNN). Involved in the catabolism of quinolinic acid (QA). The sequence is that of Quinolinate phosphoribosyltransferase [decarboxylating] 1b from Nicotiana tabacum (Common tobacco).